The primary structure comprises 357 residues: DNA replication and repair protein RecF (357 aa).

Position 30–37 (30–37) interacts with ATP; the sequence is GANGSGKT.

It belongs to the RecF family.

It localises to the cytoplasm. Functionally, the RecF protein is involved in DNA metabolism; it is required for DNA replication and normal SOS inducibility. RecF binds preferentially to single-stranded, linear DNA. It also seems to bind ATP. This is DNA replication and repair protein RecF from Salmonella schwarzengrund (strain CVM19633).